The chain runs to 31 residues: Sarcolipin (31 aa).

The Cytoplasmic portion of the chain corresponds to 1-7 (MGINTRE). A helical membrane pass occupies residues 8-26 (LFLNFTIVLITVILMWLLV). Over 27-31 (RSYQY) the chain is Lumenal.

This sequence belongs to the sarcolipin family. As to quaternary structure, homooligomer. Can also form heterooligomers with other sarcoplasmic/endoplasmic reticulum calcium ATPase (SERCA) regulators ARLN, ERLN, PLN and STRIT1/DWORF. Monomer. Interacts with calcium ATPase ATP2A1/SERCA1. Interacts as a monomer with ATP2A2/SERCA2; the interaction decreases ATP2A2 Ca(2+) affinity. Interacts with VMP1; VMP1 competes with PLN and SLN to prevent them from forming an inhibitory complex with ATP2A2.

The protein localises to the sarcoplasmic reticulum membrane. It is found in the endoplasmic reticulum membrane. In terms of biological role, reversibly inhibits the activity of ATP2A1/SERCA1 and ATP2A2/SERCA2 in sarcoplasmic reticulum by decreasing the apparent affinity of the ATPase for Ca(2+). Also inhibits the activity of ATP2A3/SERCA3. Modulates calcium re-uptake during muscle relaxation and plays an important role in calcium homeostasis in muscle. Required for muscle-based, non-shivering thermogenesis. This Homo sapiens (Human) protein is Sarcolipin.